Here is a 103-residue protein sequence, read N- to C-terminus: NADH-quinone oxidoreductase subunit K (103 aa).

Helical transmembrane passes span I6–L26, L30–A50, and F66–F86.

The protein belongs to the complex I subunit 4L family. As to quaternary structure, NDH-1 is composed of 14 different subunits. Subunits NuoA, H, J, K, L, M, N constitute the membrane sector of the complex.

The protein resides in the cell inner membrane. It catalyses the reaction a quinone + NADH + 5 H(+)(in) = a quinol + NAD(+) + 4 H(+)(out). In terms of biological role, NDH-1 shuttles electrons from NADH, via FMN and iron-sulfur (Fe-S) centers, to quinones in the respiratory chain. The immediate electron acceptor for the enzyme in this species is believed to be ubiquinone. Couples the redox reaction to proton translocation (for every two electrons transferred, four hydrogen ions are translocated across the cytoplasmic membrane), and thus conserves the redox energy in a proton gradient. The sequence is that of NADH-quinone oxidoreductase subunit K from Sorangium cellulosum (strain So ce56) (Polyangium cellulosum (strain So ce56)).